The following is a 442-amino-acid chain: Transposase InsG for insertion sequence element IS4 (442 aa).

This sequence belongs to the transposase 11 family.

Its function is as follows. Involved in the transposition of the insertion sequence IS4. This Escherichia coli (strain K12) protein is Transposase InsG for insertion sequence element IS4 (insG).